The sequence spans 193 residues: MGLTGTNTTLVAPQPKGILDPRTGKPVGSDDAFFNDLNGELSDKGFIVTSADALITWARTGSLMWMTFGLACCAVEMMHISMPRYDAERFGIAPRASPRQSDVMIVAGTLTNKMAPALRKVYDQMPEPRYVISMGSCANGGGYYHYSYSVVRGCDRVVPVDIYVPGCPPTAEALLYGILLLQKKIRRTGTIER.

Polar residues predominate over residues Met-1–Val-11. The segment at Met-1–Thr-23 is disordered. Residues Cys-72, Cys-73, Cys-137, and Cys-167 each contribute to the [4Fe-4S] cluster site.

Belongs to the complex I 20 kDa subunit family. As to quaternary structure, NDH-1 is composed of 14 different subunits. Subunits NuoB, C, D, E, F, and G constitute the peripheral sector of the complex. Requires [4Fe-4S] cluster as cofactor.

The protein localises to the cell inner membrane. The catalysed reaction is a quinone + NADH + 5 H(+)(in) = a quinol + NAD(+) + 4 H(+)(out). Functionally, NDH-1 shuttles electrons from NADH, via FMN and iron-sulfur (Fe-S) centers, to quinones in the respiratory chain. Couples the redox reaction to proton translocation (for every two electrons transferred, four hydrogen ions are translocated across the cytoplasmic membrane), and thus conserves the redox energy in a proton gradient. The chain is NADH-quinone oxidoreductase subunit B from Brucella canis (strain ATCC 23365 / NCTC 10854 / RM-666).